A 232-amino-acid chain; its full sequence is MASVALIGCTGMVGSHILTSLLAHPSVARVDTISRRTPNAASAAQAKLTTFVSDDTSKWASQLSALTPIPSIFFSSFGTTRAAAGGFENQYKIEHGLNVEMARAARDAGTKVYVLVSSSGASKDSSIPYSRMKGEIEEEAKAMGFEHTVILRPGLISGTREESRPLEAAARYIAGFAGKVHSGLKDSWAQDADVIAKAAVNAGLKALEGDVPAGSEKVWVLGGSDIIKLGKE.

The N-terminal 36 residues, 1-36, are a transit peptide targeting the mitochondrion; the sequence is MASVALIGCTGMVGSHILTSLLAHPSVARVDTISRR.

Belongs to the FMP52 family.

Its subcellular location is the mitochondrion outer membrane. This is Protein fmp52-1, mitochondrial (fmp521) from Aspergillus terreus (strain NIH 2624 / FGSC A1156).